Here is a 453-residue protein sequence, read N- to C-terminus: tRNA (guanine-N(7)-)-methyltransferase non-catalytic subunit TRM82 (453 aa).

The segment at 69–99 is disordered; it reads ENEEKGIKKSKTNEGNTIEKKHDAKIPVPGP. WD repeat units lie at residues 103-143 and 244-286; these read PIYS…NDNC and GHKE…DEFD.

Belongs to the WD repeat TRM82 family. Forms a heterodimer with the catalytic subunit TRM8.

Its subcellular location is the nucleus. It functions in the pathway tRNA modification; N(7)-methylguanine-tRNA biosynthesis. In terms of biological role, required for the formation of N(7)-methylguanine at position 46 (m7G46) in tRNA. In the complex, it is required to stabilize and induce conformational changes of the catalytic subunit. The sequence is that of tRNA (guanine-N(7)-)-methyltransferase non-catalytic subunit TRM82 from Vanderwaltozyma polyspora (strain ATCC 22028 / DSM 70294 / BCRC 21397 / CBS 2163 / NBRC 10782 / NRRL Y-8283 / UCD 57-17) (Kluyveromyces polysporus).